Consider the following 431-residue polypeptide: Interleukin-11 receptor subunit alpha (431 aa).

The first 23 residues, 1–23, serve as a signal peptide directing secretion; sequence MSSSRSGLTRVLVAVATALVSSS. At 24 to 371 the chain is on the extracellular side; sequence TPCPQAWGPP…DPLEQVAVLA (348 aa). The Ig-like C2-type domain occupies 27 to 110; the sequence is PQAWGPPGVQ…FGGMVTLKLG (84 aa). 3 disulfide bridges follow: Cys48–Cys94, Cys120–Cys130, and Cys170–Cys180. Fibronectin type-III domains are found at residues 112–219 and 220–317; these read PPAR…LRPD and PPQG…TPST. A glycan (N-linked (GlcNAc...) asparagine) is linked at Asn127. The segment at 151–170 is disordered; sequence KTLPGAESQRESPSTGPWPC. Asn194 carries an N-linked (GlcNAc...) asparagine glycan. The WSXWS motif signature appears at 304–308; it reads WSAWS. Residues 310–360 form a disordered region; the sequence is EAWGTPSTGPLRDEVPDGSRGHEQKLEAAAQEDSPAPPSPSLQPDPRPLDH. Basic and acidic residues predominate over residues 320–335; that stretch reads LRDEVPDGSRGHEQKL. Positions 344 to 355 are enriched in pro residues; it reads PAPPSPSLQPDP. A helical membrane pass occupies residues 372-392; that stretch reads SLGIFSFLGLAVGALALGLWL. At 393–431 the chain is on the cytoplasmic side; it reads RLRRSGKDGPQKPGFLAPMIPGDKLPGIPNLQRTPENFS. Residues 402-431 are disordered; the sequence is PQKPGFLAPMIPGDKLPGIPNLQRTPENFS.

It belongs to the type I cytokine receptor family. Type 3 subfamily. On IL11 binding, forms a multimer complex with IL6ST/gp130. A short soluble form is also released from the membrane by proteolysis. The sIL11RA is formed either by limited proteolysis of membrane-bound receptors, a process referred to as ectodomain shedding, or directly secreted from the cells after alternative mRNA splicing. mIL11RA is cleaved by the proteases ADAM10, ELANE and PRTN3.

Its subcellular location is the membrane. The protein localises to the secreted. In terms of biological role, receptor for interleukin-11 (IL11). The receptor systems for IL6, LIF, OSM, CNTF, IL11 and CT1 can utilize IL6ST for initiating signal transmission. The IL11/IL11RA/IL6ST complex may be involved in the control of proliferation and/or differentiation of skeletogenic progenitor or other mesenchymal cells. Essential for the normal development of craniofacial bones and teeth. Restricts suture fusion and tooth number. Soluble form of IL11 receptor (sIL11RA) that acts as an agonist of IL11 activity. The IL11:sIL11RA complex binds to IL6ST/gp130 on cell surfaces and induces signaling also on cells that do not express membrane-bound IL11RA in a process called IL11 trans-signaling. In Rattus norvegicus (Rat), this protein is Interleukin-11 receptor subunit alpha.